A 1402-amino-acid polypeptide reads, in one-letter code: Roundabout homolog 3 (1402 aa).

An N-terminal signal peptide occupies residues 1–20 (MLRYLLKTLLQMNLFADSLA). The Extracellular segment spans residues 21-891 (RDISNSSELL…ERLAKVLRKP (871 aa)). Residues N25, N34, and N53 are each glycosylated (N-linked (GlcNAc...) asparagine). Ig-like C2-type domains lie at 64-160 (PRIV…ASLE), 166-253 (DDFR…AELV), 258-342 (PSFL…GSLS), 347-440 (PQFV…ALLE), and 450-531 (PPII…GEAT). C85 and C143 are disulfide-bonded. An N-linked (GlcNAc...) asparagine glycan is attached at N156. 2 cysteine pairs are disulfide-bonded: C187-C236 and C279-C326. Residues N355, N363, N410, N459, and N503 are each glycosylated (N-linked (GlcNAc...) asparagine). An intrachain disulfide couples C368 to C424. An intrachain disulfide couples C472 to C521. Disordered regions lie at residues 540-561 (EDWG…PPSQ) and 639-662 (EPSP…EDPW). The segment covering 543–552 (GASPGPATGP) has biased composition (low complexity). Fibronectin type-III domains are found at residues 558 to 652 (PPSQ…TQDS), 672 to 766 (AVRM…IPEE), and 771 to 869 (PPQG…FPPA). Over residues 646–655 (PVQTQDSSLS) the composition is skewed to polar residues. Residues N784, N813, and N820 are each glycosylated (N-linked (GlcNAc...) asparagine). A helical transmembrane segment spans residues 892 to 912 (AFLAGSSAACGALLLGFCAAL). Residues 913 to 1402 (YRRQKQRKEL…PGRNRREEPR (490 aa)) are Cytoplasmic-facing. Disordered regions lie at residues 965–989 (SWPH…NPDP), 1032–1307 (FHGG…VVQA), and 1340–1402 (GRPS…EEPR). 2 stretches are compositionally biased toward polar residues: residues 1038–1049 (QHSSGDPSTWSQ) and 1142–1152 (PSPTSSYGQQS). Residues 1158–1169 (PSPPDPPQPPTD) show a composition bias toward pro residues. Composition is skewed to low complexity over residues 1178–1191 (RRVP…LSVS) and 1215–1228 (ASPS…SSAP). A compositionally biased stretch (basic residues) spans 1243 to 1254 (HGHRARIRKKPK). S1263 is subject to Phosphoserine. The span at 1294–1304 (LERERSGERRV) shows a compositional bias: basic and acidic residues. The span at 1346-1357 (SHGQGTSTCSTA) shows a compositional bias: polar residues. The span at 1358-1371 (GSNSSRGSNSSRGS) shows a compositional bias: low complexity.

The protein belongs to the immunoglobulin superfamily. ROBO family. Interacts (via Fibronectin type-III 1 domain) with NELL2 (via the EGF domains) with a 3:3 stoichiometry; this interaction promotes oligomerization of ROBO3 resulting in the repulsion of commissural axons in the midline. In terms of tissue distribution, detected in embryonal spinal cord and hindbrain.

It localises to the membrane. Receptor involved in axon guidance during development. Acts as a multifunctional regulator of pathfinding that simultaneously mediates NELL2 repulsion, inhibits SLIT repulsion, and facilitates Netrin-1/NTN1 attraction. In spinal cord development plays a role in guiding commissural axons probably by preventing premature sensitivity to Slit proteins thus inhibiting Slit signaling through ROBO1/ROBO2. Binding OF NELL2 to the receptor ROBO3 promotes oligomerization of ROBO3, resulting in the repulsion of commissural axons in the midline. ROBO3 also indirectly boosts axon attraction to NTN1 without interacting with NTN1 itself. Its function is as follows. Mediates NELL2 premature repulsion of commissural axons during midline crossing. Functionally, after midline crossing by the commissural axons, may, in concert with ROBO1 and ROBO2, prevent midline recrossing. Does not mediate NELL2 signaling. In Mus musculus (Mouse), this protein is Roundabout homolog 3.